We begin with the raw amino-acid sequence, 698 residues long: Topoisomerase subunit TopoN (698 aa).

K429 is covalently cross-linked (Isoglutamyl lysine isopeptide (Lys-Gln) (interchain with Q-Cter in protein Pup)). The interval 443–473 (GAKARARAASKAKGLGTNLSLPPKLLPSRES) is disordered. The 115-residue stretch at 479–593 (AELFLCEGDS…AGMVYVTMPP (115 aa)) folds into the Toprim domain.

It belongs to the type II topoisomerase family. A complex of TopoN and TopoM, possibly a heterotetramer. The cofactor is Mg(2+).

It carries out the reaction ATP-dependent breakage, passage and rejoining of double-stranded DNA.. Inhibited by quinolone antibiotic ciprofloxacin and coumarin antibiotic novobiocin, but at much higher concentrations than is usual for DNA gyrase/topoisomerase. Functionally, catalyzes the relaxation of negatively supercoiled DNA in the presence of ATP or dATP but not other nucleotides. Individual subunits have no activity. Not able to negatively supercoil DNA, it can however introduce positive supercoils in DNA. Relaxes positive supercoils in an ATP-dependent manner. Catenates and decatenates DNA. Generates dsDNA breaks in the presence of the quinolone antibiotic ciprofloxacin, showing it is a topoisomerase. This is Topoisomerase subunit TopoN from Mycolicibacterium smegmatis (strain ATCC 700084 / mc(2)155) (Mycobacterium smegmatis).